Consider the following 240-residue polypeptide: Ribonuclease 3 (240 aa).

The RNase III domain maps to 4 to 134 (SRQPLLDALG…LLGAIYLQHG (131 aa)). Mg(2+) is bound at residue glutamate 44. The active site involves aspartate 48. Mg(2+)-binding residues include aspartate 120 and glutamate 123. The active site involves glutamate 123. Residues 161-229 (DWKTSLQELT…AAAAWKALEV (69 aa)) enclose the DRBM domain.

This sequence belongs to the ribonuclease III family. In terms of assembly, homodimer. Mg(2+) serves as cofactor.

It localises to the cytoplasm. The enzyme catalyses Endonucleolytic cleavage to 5'-phosphomonoester.. Digests double-stranded RNA. Involved in the processing of primary rRNA transcript to yield the immediate precursors to the large and small rRNAs (23S and 16S). Processes some mRNAs, and tRNAs when they are encoded in the rRNA operon. Processes pre-crRNA and tracrRNA of type II CRISPR loci if present in the organism. The sequence is that of Ribonuclease 3 from Mycobacterium bovis (strain ATCC BAA-935 / AF2122/97).